Consider the following 398-residue polypeptide: Phosphoglycerate kinase (398 aa).

Substrate-binding positions include 21-23 (DFN), Arg36, 59-62 (HLGR), Arg119, and Arg157. ATP contacts are provided by residues Lys208, Gly296, Glu327, and 354-357 (GGDS).

Belongs to the phosphoglycerate kinase family. In terms of assembly, monomer.

The protein localises to the cytoplasm. The catalysed reaction is (2R)-3-phosphoglycerate + ATP = (2R)-3-phospho-glyceroyl phosphate + ADP. It participates in carbohydrate degradation; glycolysis; pyruvate from D-glyceraldehyde 3-phosphate: step 2/5. This chain is Phosphoglycerate kinase, found in Streptococcus uberis (strain ATCC BAA-854 / 0140J).